Consider the following 155-residue polypeptide: Ferredoxin-6, chloroplastic (155 aa).

A chloroplast-targeting transit peptide spans 1-58 (MSTATAPRLPAPRSGASYHYQTTAAPAANTLSFAGHARQAARASGPRLSSRFVASAAA). The 92-residue stretch at 61-152 (HKVKLVGPDG…DCVIHTHKEE (92 aa)) folds into the 2Fe-2S ferredoxin-type domain. [2Fe-2S] cluster is bound by residues cysteine 98, cysteine 103, cysteine 106, and cysteine 136.

It belongs to the 2Fe2S plant-type ferredoxin family. [2Fe-2S] cluster serves as cofactor.

The protein localises to the plastid. The protein resides in the chloroplast. Its function is as follows. Ferredoxins are iron-sulfur proteins that transfer electrons in a wide variety of metabolic reactions. This is Ferredoxin-6, chloroplastic (FDX6) from Zea mays (Maize).